Here is a 125-residue protein sequence, read N- to C-terminus: Large ribosomal subunit protein bL12 (125 aa).

This sequence belongs to the bacterial ribosomal protein bL12 family. Homodimer. Part of the ribosomal stalk of the 50S ribosomal subunit. Forms a multimeric L10(L12)X complex, where L10 forms an elongated spine to which 2 to 4 L12 dimers bind in a sequential fashion. Binds GTP-bound translation factors.

Functionally, forms part of the ribosomal stalk which helps the ribosome interact with GTP-bound translation factors. Is thus essential for accurate translation. The chain is Large ribosomal subunit protein bL12 from Sphingopyxis alaskensis (strain DSM 13593 / LMG 18877 / RB2256) (Sphingomonas alaskensis).